The sequence spans 567 residues: Proline--tRNA ligase (567 aa).

This sequence belongs to the class-II aminoacyl-tRNA synthetase family. ProS type 1 subfamily. Homodimer.

The protein resides in the cytoplasm. It carries out the reaction tRNA(Pro) + L-proline + ATP = L-prolyl-tRNA(Pro) + AMP + diphosphate. In terms of biological role, catalyzes the attachment of proline to tRNA(Pro) in a two-step reaction: proline is first activated by ATP to form Pro-AMP and then transferred to the acceptor end of tRNA(Pro). As ProRS can inadvertently accommodate and process non-cognate amino acids such as alanine and cysteine, to avoid such errors it has two additional distinct editing activities against alanine. One activity is designated as 'pretransfer' editing and involves the tRNA(Pro)-independent hydrolysis of activated Ala-AMP. The other activity is designated 'posttransfer' editing and involves deacylation of mischarged Ala-tRNA(Pro). The misacylated Cys-tRNA(Pro) is not edited by ProRS. The chain is Proline--tRNA ligase from Staphylococcus aureus (strain Mu3 / ATCC 700698).